The following is an 80-amino-acid chain: Small ribosomal subunit protein uS17c (80 aa).

This sequence belongs to the universal ribosomal protein uS17 family. In terms of assembly, part of the 30S ribosomal subunit.

It localises to the plastid. The protein resides in the chloroplast. Its function is as follows. One of the primary rRNA binding proteins, it binds specifically to the 5'-end of 16S ribosomal RNA. In Gracilaria tenuistipitata var. liui (Red alga), this protein is Small ribosomal subunit protein uS17c (rps17).